We begin with the raw amino-acid sequence, 324 residues long: Lipoyl synthase (324 aa).

Cys-65, Cys-70, Cys-76, Cys-91, Cys-95, Cys-98, and Ser-302 together coordinate [4Fe-4S] cluster. Positions 77-291 constitute a Radical SAM core domain; that stretch reads WEDREATFLI…AQYAEGLGFA (215 aa).

Belongs to the radical SAM superfamily. Lipoyl synthase family. [4Fe-4S] cluster serves as cofactor.

The protein resides in the cytoplasm. The catalysed reaction is [[Fe-S] cluster scaffold protein carrying a second [4Fe-4S](2+) cluster] + N(6)-octanoyl-L-lysyl-[protein] + 2 oxidized [2Fe-2S]-[ferredoxin] + 2 S-adenosyl-L-methionine + 4 H(+) = [[Fe-S] cluster scaffold protein] + N(6)-[(R)-dihydrolipoyl]-L-lysyl-[protein] + 4 Fe(3+) + 2 hydrogen sulfide + 2 5'-deoxyadenosine + 2 L-methionine + 2 reduced [2Fe-2S]-[ferredoxin]. It functions in the pathway protein modification; protein lipoylation via endogenous pathway; protein N(6)-(lipoyl)lysine from octanoyl-[acyl-carrier-protein]: step 2/2. Its function is as follows. Catalyzes the radical-mediated insertion of two sulfur atoms into the C-6 and C-8 positions of the octanoyl moiety bound to the lipoyl domains of lipoate-dependent enzymes, thereby converting the octanoylated domains into lipoylated derivatives. The chain is Lipoyl synthase from Mycobacterium ulcerans (strain Agy99).